Reading from the N-terminus, the 153-residue chain is Protein eva-1 homolog A (153 aa).

A helical transmembrane segment spans residues 37 to 57 (ALYFVCGVCLGLVLTLIALVV). The disordered stretch occupies residues 66 to 97 (KTQQAPKKTGKTVENTSDTSDSDSDWDNTSDL).

This sequence belongs to the EVA1 family.

It localises to the endoplasmic reticulum membrane. Its subcellular location is the lysosome membrane. Its function is as follows. Acts as a regulator of programmed cell death, mediating both autophagy and apoptosis. The protein is Protein eva-1 homolog A (Eva1a) of Danio rerio (Zebrafish).